The chain runs to 638 residues: Threonine--tRNA ligase (638 aa).

Residues 1–61 enclose the TGS domain; the sequence is MPIITLPDGS…NKDSKVVIIT (61 aa). The interval 242 to 533 is catalytic; sequence DHRKLGKKHS…LIEQYEAKFP (292 aa). Cys333, His384, and His510 together coordinate Zn(2+).

It belongs to the class-II aminoacyl-tRNA synthetase family. Homodimer. It depends on Zn(2+) as a cofactor.

It is found in the cytoplasm. It carries out the reaction tRNA(Thr) + L-threonine + ATP = L-threonyl-tRNA(Thr) + AMP + diphosphate + H(+). Its function is as follows. Catalyzes the attachment of threonine to tRNA(Thr) in a two-step reaction: L-threonine is first activated by ATP to form Thr-AMP and then transferred to the acceptor end of tRNA(Thr). Also edits incorrectly charged L-seryl-tRNA(Thr). The chain is Threonine--tRNA ligase from Prochlorococcus marinus (strain AS9601).